The following is a 135-amino-acid chain: Helix-loop-helix protein 2 (135 aa).

Positions 1 to 81 (MMLSPDQAAD…RRATAKYRSA (81 aa)) are disordered. The segment covering 10 to 21 (DSDHPSSTHSDP) has biased composition (basic and acidic residues). A compositionally biased stretch (basic residues) spans 68–81 (KRRRRRATAKYRSA). The bHLH domain occupies 77–129 (KYRSAHATRERIRVEAFNLAFAELRKLLPTLPPDKKLSKIEILRLAICYISYL).

Homodimer. Interacts and may form heterodimers with STAT3. As to expression, expressed in developing neurons. Transiently expressed in the cerebellum during postnatal development, exclusively in the premigratory zone of the external granule layer where postmitotic neurons undergo initial stages of neuronal differentiation. Expression is not detected in mature neurons. Expressed in the anterior lobe of the adult pituitary.

The protein resides in the nucleus. Functionally, transcription factor which binds the E box motif 5'-CA[TC][AG]TG-3'. Involved in regulating energy expenditure, body mass, voluntary physical activity, mating behavior and reproductive longevity, acting through the hypothalamic-pituitary-gonadal axis. Acts as a transcriptional activator of target genes, including Ndn, Pcsk1, Mc4r. Is also a transcriptional activator of KISS1. May act centrally to regulate function of both white and brown adipose tissue. Together with NHLH1, required to maintain migration and survival of cells in the anterior extramural migration stream (aes), which forms the precerebellar nuclei. Also, in concert with Nhlh1, may determine fate of gonadotropin releasing hormone-1 (GnRH-1) neurons. The protein is Helix-loop-helix protein 2 (Nhlh2) of Mus musculus (Mouse).